We begin with the raw amino-acid sequence, 419 residues long: Peptide chain release factor subunit 1 (419 aa).

This sequence belongs to the eukaryotic release factor 1 family. In terms of assembly, heterodimer of two subunits, one of which binds GTP.

The protein resides in the cytoplasm. In terms of biological role, directs the termination of nascent peptide synthesis (translation) in response to the termination codons UAA, UAG and UGA. This chain is Peptide chain release factor subunit 1, found in Methanococcus maripaludis (strain C5 / ATCC BAA-1333).